Here is a 164-residue protein sequence, read N- to C-terminus: B-phycoerythrin alpha chain (164 aa).

Residues Cys-82 and Cys-139 each coordinate (2R,3E)-phycoerythrobilin.

The protein belongs to the phycobiliprotein family. As to quaternary structure, heteromer of 6 alpha, 6 beta and one gamma chain. Post-translationally, contains two covalently linked bilin chromophores.

The protein localises to the plastid. The protein resides in the chloroplast thylakoid membrane. In terms of biological role, light-harvesting photosynthetic bile pigment-protein from the phycobiliprotein complex. This chain is B-phycoerythrin alpha chain (cpeA), found in Porphyridium purpureum (Red alga).